A 106-amino-acid chain; its full sequence is MSLLAYAAAALAEIAGCFAFWAWMRLGRSAWWTLPGLASLAAFAALLTLVDSPAAGRTFAAYGGVYVAASVLWLWLAEGQRPDRWDLAGSAVCLAGTALILLGRRG.

The next 4 membrane-spanning stretches (helical) occupy residues 3–23, 30–50, 59–79, and 87–104; these read LLAY…FWAW, AWWT…LTLV, FAAY…LAEG, and LAGS…LLGR.

This sequence belongs to the UPF0060 family.

The protein localises to the cell inner membrane. This chain is UPF0060 membrane protein Mrad2831_0929, found in Methylobacterium radiotolerans (strain ATCC 27329 / DSM 1819 / JCM 2831 / NBRC 15690 / NCIMB 10815 / 0-1).